We begin with the raw amino-acid sequence, 278 residues long: Phosphatidylglycerol--prolipoprotein diacylglyceryl transferase (278 aa).

3 helical membrane-spanning segments follow: residues 21 to 41 (WYGIIIAMGILLGYFIAQASV), 54 to 74 (IIFWSAIFGFIIARIYFVIFQ), and 88 to 108 (IWQGGIAIHGGLIGGFVTGII). Arg136 serves as a coordination point for a 1,2-diacyl-sn-glycero-3-phospho-(1'-sn-glycerol). 3 helical membrane-spanning segments follow: residues 176 to 196 (QPTFLYESIWDVLGFVILILL), 202 to 222 (IGDTFCLYLIWYSIGRFFVEG), and 234 to 254 (IRIAQLMSIILIIIGVVIMIV).

Belongs to the Lgt family.

The protein resides in the cell membrane. The catalysed reaction is L-cysteinyl-[prolipoprotein] + a 1,2-diacyl-sn-glycero-3-phospho-(1'-sn-glycerol) = an S-1,2-diacyl-sn-glyceryl-L-cysteinyl-[prolipoprotein] + sn-glycerol 1-phosphate + H(+). The protein operates within protein modification; lipoprotein biosynthesis (diacylglyceryl transfer). Functionally, catalyzes the transfer of the diacylglyceryl group from phosphatidylglycerol to the sulfhydryl group of the N-terminal cysteine of a prolipoprotein, the first step in the formation of mature lipoproteins. In Staphylococcus saprophyticus subsp. saprophyticus (strain ATCC 15305 / DSM 20229 / NCIMB 8711 / NCTC 7292 / S-41), this protein is Phosphatidylglycerol--prolipoprotein diacylglyceryl transferase.